A 429-amino-acid chain; its full sequence is Probable proton-coupled zinc antiporter SLC30A4 (429 aa).

Residues Met1–Arg113 lie on the Cytoplasmic side of the membrane. A helical transmembrane segment spans residues Leu114–Ile134. Topologically, residues Ala135 to Asp143 are lumenal. Residues Ala144 to Ser164 traverse the membrane as a helical segment. Residues His146 and Asp150 each contribute to the Zn(2+) site. Residues Ser165–Arg178 are Cytoplasmic-facing. A helical transmembrane segment spans residues Leu179–Leu199. Over Tyr200 to Asp216 the chain is Lumenal. A helical membrane pass occupies residues Ile217–Asn237. Residues Gln238–Ala274 are Cytoplasmic-facing. The interval Gly240 to His264 is zinc binding. The helical transmembrane segment at Phe275–Ile295 threads the bilayer. Zn(2+)-binding residues include His277 and Asp281. Over Arg296 to Tyr310 the chain is Lumenal. The chain crosses the membrane as a helical span at residues Val311 to Ile331. The Cytoplasmic portion of the chain corresponds to Leu332–Pro429.

Belongs to the cation diffusion facilitator (CDF) transporter (TC 2.A.4) family. SLC30A subfamily. Homodimer; dityrosine-linked. Homodimerization could be specific of the human protein and enhances the zinc transport efficiency. Interacts with TMEM163. Homodimerization through dityrosine bonds is stimulated by oxidative stress.

It is found in the endosome membrane. The protein resides in the late endosome membrane. The protein localises to the lysosome membrane. The enzyme catalyses Zn(2+)(in) + 2 H(+)(out) = Zn(2+)(out) + 2 H(+)(in). Its function is as follows. Probable proton-coupled zinc ion antiporter mediating zinc import from cytoplasm potentially into the endocytic compartment. Controls zinc deposition in milk. The sequence is that of Probable proton-coupled zinc antiporter SLC30A4 from Homo sapiens (Human).